A 600-amino-acid chain; its full sequence is CTP synthase (600 aa).

Residues Thr304 to Ser570 enclose the Glutamine amidotransferase type-1 domain. Catalysis depends on for GATase activity residues Cys403, His532, and Glu534.

Belongs to the CTP synthase family.

It carries out the reaction UTP + L-glutamine + ATP + H2O = CTP + L-glutamate + ADP + phosphate + 2 H(+). The protein operates within pyrimidine metabolism; CTP biosynthesis via de novo pathway; CTP from UDP: step 2/2. Its function is as follows. Catalyzes the ATP-dependent amination of UTP to CTP with either L-glutamine or ammonia as the source of nitrogen. This is CTP synthase (ura7) from Schizosaccharomyces pombe (strain 972 / ATCC 24843) (Fission yeast).